The following is an 840-amino-acid chain: Microcephalin (840 aa).

The 93-residue stretch at 1–93 (MAAHILKDVV…AHIDESLFPA (93 aa)) folds into the BRCT 1 domain. Residues 184-206 (KEKRENLSPSSSQMIQQSHDNPS) form a disordered region. Positions 190 to 206 (LSPSSSQMIQQSHDNPS) are enriched in polar residues. A phosphoserine mark is found at S279, S287, S296, and S333. Disordered stretches follow at residues 313–379 (PDQK…SIRR) and 418–437 (PDNL…QLPS). Position 335 is a phosphothreonine (T335). Positions 355-378 (KRQRVSHGSHSPSKGKSKRKRSIR) are enriched in basic residues. Polar residues predominate over residues 427 to 437 (ENLPPTSQLPS). Position 552 is a phosphoserine (S552). A disordered region spans residues 562-586 (LKSTQNKGTTSKISNSSEGEAQSEH). Over residues 563–581 (KSTQNKGTTSKISNSSEGE) the composition is skewed to polar residues. BRCT domains lie at 644–734 (SGRG…PFEL) and 755–837 (YRGT…NYLL).

As to quaternary structure, interacts with CDC27 and maybe other components of the APC/C complex. Interacts with histone variant H2AX under DNA damage conditions.

The protein resides in the cytoplasm. Its subcellular location is the cytoskeleton. It is found in the microtubule organizing center. It localises to the centrosome. Implicated in chromosome condensation and DNA damage induced cellular responses. May play a role in neurogenesis and regulation of the size of the cerebral cortex. This chain is Microcephalin, found in Hylobates lar (Lar gibbon).